Consider the following 434-residue polypeptide: 3-phosphoshikimate 1-carboxyvinyltransferase (434 aa).

3 residues coordinate 3-phosphoshikimate: Lys22, Ser23, and Arg27. Lys22 serves as a coordination point for phosphoenolpyruvate. Phosphoenolpyruvate is bound by residues Gly93 and Arg121. 3-phosphoshikimate-binding residues include Ser168, Ser169, Gln170, Ser199, Asp320, and Lys347. Position 170 (Gln170) interacts with phosphoenolpyruvate. Catalysis depends on Asp320, which acts as the Proton acceptor. 3 residues coordinate phosphoenolpyruvate: Arg351, Arg394, and Lys419.

The protein belongs to the EPSP synthase family. As to quaternary structure, monomer.

It is found in the cytoplasm. The enzyme catalyses 3-phosphoshikimate + phosphoenolpyruvate = 5-O-(1-carboxyvinyl)-3-phosphoshikimate + phosphate. It participates in metabolic intermediate biosynthesis; chorismate biosynthesis; chorismate from D-erythrose 4-phosphate and phosphoenolpyruvate: step 6/7. Catalyzes the transfer of the enolpyruvyl moiety of phosphoenolpyruvate (PEP) to the 5-hydroxyl of shikimate-3-phosphate (S3P) to produce enolpyruvyl shikimate-3-phosphate and inorganic phosphate. This chain is 3-phosphoshikimate 1-carboxyvinyltransferase, found in Burkholderia ambifaria (strain ATCC BAA-244 / DSM 16087 / CCUG 44356 / LMG 19182 / AMMD) (Burkholderia cepacia (strain AMMD)).